The primary structure comprises 188 residues: Chitin synthase 2 (188 aa).

This sequence belongs to the chitin synthase family.

It is found in the cell membrane. The catalysed reaction is [(1-&gt;4)-N-acetyl-beta-D-glucosaminyl](n) + UDP-N-acetyl-alpha-D-glucosamine = [(1-&gt;4)-N-acetyl-beta-D-glucosaminyl](n+1) + UDP + H(+). In terms of biological role, polymerizes chitin, a structural polymer of the cell wall and septum, by transferring the sugar moiety of UDP-GlcNAc to the non-reducing end of the growing chitin polymer. This chain is Chitin synthase 2 (CHS2), found in Exophiala jeanselmei (Dematiaceous fungus).